The sequence spans 280 residues: Pantothenate synthetase (280 aa).

Residue Met-31–His-38 participates in ATP binding. The active-site Proton donor is His-38. Gln-62 contributes to the (R)-pantoate binding site. A beta-alanine-binding site is contributed by Gln-62. Residue Gly-150 to Asp-153 participates in ATP binding. A (R)-pantoate-binding site is contributed by Gln-156. Residues Val-179 and Met-187–Arg-190 contribute to the ATP site.

This sequence belongs to the pantothenate synthetase family. In terms of assembly, homodimer.

The protein localises to the cytoplasm. The catalysed reaction is (R)-pantoate + beta-alanine + ATP = (R)-pantothenate + AMP + diphosphate + H(+). It participates in cofactor biosynthesis; (R)-pantothenate biosynthesis; (R)-pantothenate from (R)-pantoate and beta-alanine: step 1/1. In terms of biological role, catalyzes the condensation of pantoate with beta-alanine in an ATP-dependent reaction via a pantoyl-adenylate intermediate. This Xanthomonas axonopodis pv. citri (strain 306) protein is Pantothenate synthetase.